The primary structure comprises 395 residues: Na(+)/H(+) antiporter NhaA 1 (395 aa).

11 helical membrane passes run 11 to 31 (FFSS…LAMV), 63 to 83 (MLLW…GLEV), 99 to 119 (VFPV…YLAF), 129 to 149 (GWAI…ALLG), 158 to 178 (IFLM…IALF), 183 to 203 (LSML…ALNL), 223 to 243 (VLKS…MIPL), 258 to 278 (VLHP…NAGV), 282 to 302 (GVTL…GLFI), 332 to 352 (IMAV…IATL), and 364 to 384 (WAKL…YLIL).

It belongs to the NhaA Na(+)/H(+) (TC 2.A.33) antiporter family.

It is found in the cell inner membrane. It carries out the reaction Na(+)(in) + 2 H(+)(out) = Na(+)(out) + 2 H(+)(in). Na(+)/H(+) antiporter that extrudes sodium in exchange for external protons. This is Na(+)/H(+) antiporter NhaA 1 from Klebsiella pneumoniae subsp. pneumoniae (strain ATCC 700721 / MGH 78578).